The chain runs to 225 residues: Uracil-DNA glycosylase (225 aa).

The Proton acceptor role is filled by D65.

It belongs to the uracil-DNA glycosylase (UDG) superfamily. UNG family.

It localises to the cytoplasm. It carries out the reaction Hydrolyzes single-stranded DNA or mismatched double-stranded DNA and polynucleotides, releasing free uracil.. Functionally, excises uracil residues from the DNA which can arise as a result of misincorporation of dUMP residues by DNA polymerase or due to deamination of cytosine. In Alkaliphilus oremlandii (strain OhILAs) (Clostridium oremlandii (strain OhILAs)), this protein is Uracil-DNA glycosylase.